A 215-amino-acid chain; its full sequence is Cytochrome b6 (215 aa).

The helical transmembrane segment at 32–52 threads the bilayer; it reads IFYCLGGITLTCFLVQVATGF. Cysteine 35 contacts heme c. Residues histidine 86 and histidine 100 each coordinate heme b. 3 consecutive transmembrane segments (helical) span residues 90–110, 116–136, and 186–206; these read ASMM…TGGF, LTWV…VTGY, and LHTF…FLMI. Heme b-binding residues include histidine 187 and histidine 202.

Belongs to the cytochrome b family. PetB subfamily. As to quaternary structure, the 4 large subunits of the cytochrome b6-f complex are cytochrome b6, subunit IV (17 kDa polypeptide, PetD), cytochrome f and the Rieske protein, while the 4 small subunits are PetG, PetL, PetM and PetN. The complex functions as a dimer. Heme b is required as a cofactor. It depends on heme c as a cofactor.

It localises to the plastid. It is found in the chloroplast thylakoid membrane. Its function is as follows. Component of the cytochrome b6-f complex, which mediates electron transfer between photosystem II (PSII) and photosystem I (PSI), cyclic electron flow around PSI, and state transitions. The chain is Cytochrome b6 from Ostreococcus tauri.